Consider the following 495-residue polypeptide: Hydroxyneurosporene desaturase (495 aa).

Belongs to the carotenoid/retinoid oxidoreductase family.

It carries out the reaction rhodopin + A = (3E)-3,4-didehydrorhodopin + AH2. Its pathway is carotenoid biosynthesis; spheroidene biosynthesis. Its function is as follows. Catalyzes the introduction of C-3,4 double bonds into 1-hydroxyneurosporene (1-HO-Neu) to yield demethylspheroidene (DMS). It prefer the acyclic carotenoids such as 1-hydroxylycopene, and 1-hydroxy-gamma-carotene, whereas 1-hydroxy-3,4-didehydrolycopene and 1,1-dihydroxylycopene are much less effective. The chain is Hydroxyneurosporene desaturase (crtD) from Cereibacter sphaeroides (strain ATCC 17023 / DSM 158 / JCM 6121 / CCUG 31486 / LMG 2827 / NBRC 12203 / NCIMB 8253 / ATH 2.4.1.) (Rhodobacter sphaeroides).